Here is a 462-residue protein sequence, read N- to C-terminus: L-seryl-tRNA(Sec) selenium transferase (462 aa).

At Lys-292 the chain carries N6-(pyridoxal phosphate)lysine.

This sequence belongs to the SelA family. Requires pyridoxal 5'-phosphate as cofactor.

Its subcellular location is the cytoplasm. The enzyme catalyses L-seryl-tRNA(Sec) + selenophosphate + H(+) = L-selenocysteinyl-tRNA(Sec) + phosphate. Its pathway is aminoacyl-tRNA biosynthesis; selenocysteinyl-tRNA(Sec) biosynthesis; selenocysteinyl-tRNA(Sec) from L-seryl-tRNA(Sec) (bacterial route): step 1/1. Converts seryl-tRNA(Sec) to selenocysteinyl-tRNA(Sec) required for selenoprotein biosynthesis. The sequence is that of L-seryl-tRNA(Sec) selenium transferase from Clostridium perfringens (strain 13 / Type A).